The following is a 217-amino-acid chain: Cytidylate kinase (217 aa).

10–18 (GPAGAGKST) is a binding site for ATP.

It belongs to the cytidylate kinase family. Type 1 subfamily.

Its subcellular location is the cytoplasm. It catalyses the reaction CMP + ATP = CDP + ADP. The enzyme catalyses dCMP + ATP = dCDP + ADP. This Clostridium botulinum (strain Langeland / NCTC 10281 / Type F) protein is Cytidylate kinase.